The chain runs to 336 residues: Methionyl-tRNA formyltransferase (336 aa).

112 to 115 (SILP) is a (6S)-5,6,7,8-tetrahydrofolate binding site.

It belongs to the Fmt family.

The enzyme catalyses L-methionyl-tRNA(fMet) + (6R)-10-formyltetrahydrofolate = N-formyl-L-methionyl-tRNA(fMet) + (6S)-5,6,7,8-tetrahydrofolate + H(+). Attaches a formyl group to the free amino group of methionyl-tRNA(fMet). The formyl group appears to play a dual role in the initiator identity of N-formylmethionyl-tRNA by promoting its recognition by IF2 and preventing the misappropriation of this tRNA by the elongation apparatus. The protein is Methionyl-tRNA formyltransferase of Trichodesmium erythraeum (strain IMS101).